A 515-amino-acid polypeptide reads, in one-letter code: AAA ATPase forming ring-shaped complexes (515 aa).

A coiled-coil region spans residues 2 to 49 (NDHDEETLASLQQANDQLMAKNHALVKALSRATQEMTKTKAQLNQLAG). 240–245 (GNGKTL) serves as a coordination point for ATP.

It belongs to the AAA ATPase family. In terms of assembly, homohexamer. Assembles into a hexameric ring structure.

In Bifidobacterium adolescentis (strain ATCC 15703 / DSM 20083 / NCTC 11814 / E194a), this protein is AAA ATPase forming ring-shaped complexes.